We begin with the raw amino-acid sequence, 447 residues long: Rab GDP dissociation inhibitor alpha (447 aa).

The protein belongs to the Rab GDI family. Interacts with RHOH. Interacts with the non-phosphorylated forms of RAB1A, RAB3A, RAB5A, RAB5B, RAB5C, RAB8A, RAB8B, RAB10, RAB12, RAB35, and RAB43.

The protein resides in the cytoplasm. It localises to the golgi apparatus. It is found in the trans-Golgi network. Its function is as follows. Regulates the GDP/GTP exchange reaction of most Rab proteins by inhibiting the dissociation of GDP from them, and the subsequent binding of GTP to them. Promotes the dissociation of GDP-bound Rab proteins from the membrane and inhibits their activation. Promotes the dissociation of RAB1A, RAB3A, RAB5A and RAB10 from membranes. This chain is Rab GDP dissociation inhibitor alpha (GDI1), found in Pongo pygmaeus (Bornean orangutan).